Reading from the N-terminus, the 135-residue chain is Large ribosomal subunit protein uL16c (135 aa).

Positions 1–23 (MLSPKKTKFRKEHRGRMKGRSSR) are enriched in basic residues. Positions 1–24 (MLSPKKTKFRKEHRGRMKGRSSRG) are disordered.

It belongs to the universal ribosomal protein uL16 family. As to quaternary structure, part of the 50S ribosomal subunit.

It localises to the plastid. The protein localises to the chloroplast. This Pelargonium hortorum (Common geranium) protein is Large ribosomal subunit protein uL16c.